We begin with the raw amino-acid sequence, 500 residues long: Abscisic acid 8'-hydroxylase 3 (500 aa).

A helical membrane pass occupies residues 3 to 23; that stretch reads ASFVIVIVISFFISLAFMCYV. A heme-binding site is contributed by C426.

This sequence belongs to the cytochrome P450 family. The cofactor is heme.

Its subcellular location is the membrane. It catalyses the reaction 2-cis-(+)-abscisate + reduced [NADPH--hemoprotein reductase] + O2 = (+)-8'-hydroxyabscisate + oxidized [NADPH--hemoprotein reductase] + H2O + H(+). Its pathway is plant hormone degradation; abscisic acid degradation. In terms of biological role, involved in the oxidative degradation of abscisic acid. The sequence is that of Abscisic acid 8'-hydroxylase 3 (CYP707A7) from Oryza sativa subsp. japonica (Rice).